Consider the following 37-residue polypeptide: Large ribosomal subunit protein bL36 (37 aa).

This sequence belongs to the bacterial ribosomal protein bL36 family.

The sequence is that of Large ribosomal subunit protein bL36 from Borreliella burgdorferi (strain ATCC 35210 / DSM 4680 / CIP 102532 / B31) (Borrelia burgdorferi).